The sequence spans 203 residues: DNA-binding transcriptional repressor ScoC (203 aa).

An HTH marR-type domain is found at 13-157 (ALVFTQKMAQ…MMCMIRHIYG (145 aa)). A DNA-binding region (H-T-H motif) is located at residues 63–86 (ISEIAKFGVMHVSTAFNFSKKLEE). A disordered region spans residues 183-203 (KKKAKDSAADEPAEELEPVNS). Acidic residues predominate over residues 191-203 (ADEPAEELEPVNS).

Homodimer. Interacts with SinR.

Its function is as follows. Negative regulator of protease production and sporulation. Acts by binding directly to the promoter of protease genes (aprE and nprE), and by repressing oligopeptide permease operons (appABCDF and oppABCDF), thereby preventing uptake of oligopeptides required for initiation of sporulation. Acts with SinR as a corepressor of epr expression. Binds to non-m6A-5-methylated 5'-GACGAG-3' sites, tested with scpA; when the target is methylated by DnmA, this repressor no longer binds and transcription is up-regulated. The polypeptide is DNA-binding transcriptional repressor ScoC (Bacillus subtilis (strain 168)).